Reading from the N-terminus, the 797-residue chain is Probable exo-1,4-beta-xylosidase bxlB (797 aa).

The signal sequence occupies residues 1–21; sequence MPLICIVYFLQYLDKIAISYA. Asn-86 and Asn-126 each carry an N-linked (GlcNAc...) asparagine glycan. Asp-312 is a catalytic residue. Asn-364, Asn-431, Asn-442, Asn-483, Asn-644, and Asn-787 each carry an N-linked (GlcNAc...) asparagine glycan.

Belongs to the glycosyl hydrolase 3 family.

Its subcellular location is the secreted. The enzyme catalyses Hydrolysis of (1-&gt;4)-beta-D-xylans, to remove successive D-xylose residues from the non-reducing termini.. Its pathway is glycan degradation; xylan degradation. In terms of biological role, xylan 1,4-beta-xylosidase involved in the hydrolysis of xylan, a major structural heterogeneous polysaccharide found in plant biomass representing the second most abundant polysaccharide in the biosphere, after cellulose. This chain is Probable exo-1,4-beta-xylosidase bxlB (bxlB), found in Aspergillus oryzae (strain ATCC 42149 / RIB 40) (Yellow koji mold).